The following is a 306-amino-acid chain: Formamidopyrimidine-DNA glycosylase (306 aa).

Proline 2 acts as the Schiff-base intermediate with DNA in catalysis. The active-site Proton donor is the glutamate 3. The active-site Proton donor; for beta-elimination activity is lysine 58. DNA-binding residues include histidine 114, arginine 136, and lysine 179. An FPG-type zinc finger spans residues 270–306 (SVYDREGEACRTSGCRGTVERIVQAGRSTFYCPHCQK). Arginine 296 acts as the Proton donor; for delta-elimination activity in catalysis.

Belongs to the FPG family. Monomer. Zn(2+) is required as a cofactor.

The enzyme catalyses Hydrolysis of DNA containing ring-opened 7-methylguanine residues, releasing 2,6-diamino-4-hydroxy-5-(N-methyl)formamidopyrimidine.. The catalysed reaction is 2'-deoxyribonucleotide-(2'-deoxyribose 5'-phosphate)-2'-deoxyribonucleotide-DNA = a 3'-end 2'-deoxyribonucleotide-(2,3-dehydro-2,3-deoxyribose 5'-phosphate)-DNA + a 5'-end 5'-phospho-2'-deoxyribonucleoside-DNA + H(+). Involved in base excision repair of DNA damaged by oxidation or by mutagenic agents. Acts as a DNA glycosylase that recognizes and removes damaged bases. Has a preference for oxidized purines, such as 7,8-dihydro-8-oxoguanine (8-oxoG). Has AP (apurinic/apyrimidinic) lyase activity and introduces nicks in the DNA strand. Cleaves the DNA backbone by beta-delta elimination to generate a single-strand break at the site of the removed base with both 3'- and 5'-phosphates. In Sinorhizobium medicae (strain WSM419) (Ensifer medicae), this protein is Formamidopyrimidine-DNA glycosylase.